A 413-amino-acid chain; its full sequence is MSKRRVVVTGLGMLSPVGNTVESTWKALLAGQSGISLIDHFDTSAYATKFAGLVKDFNCEDIISRKEQRKMDAFIQYGIVAGVQAMQDSGLEITEENATRIGAAIGSGIGGLGLIEENHTSLMNGGPRKISPFFVPSTIVNMVAGHLTIMYGLRGPSISIATACTSGVHNIGHAARIIAYGDADVMVAGGAEKASTPLGVGGFGAARALSTRNDNPQAASRPWDKERDGFVLGDGAGMLVLEEYEHAKKRGAKIYAELVGFGMSSDAYHMTSPPENGAGAALAMANALRDAGIEASQIGYVNAHGTSTPAGDKAEAQAVKTIFGEAASRVLVSSTKSMTGHLLGAAGAVESIYSILALRDQAVPPTINLDNPDEGCDLDFVPHEARQVSGMEYTLCNSFGFGGTNGSLIFKKI.

Positions 3 to 412 (KRRVVVTGLG…GTNGSLIFKK (410 aa)) constitute a Ketosynthase family 3 (KS3) domain. Catalysis depends on for beta-ketoacyl synthase activity residues cysteine 164, histidine 304, and histidine 341.

The protein belongs to the thiolase-like superfamily. Beta-ketoacyl-ACP synthases family. Homodimer.

The enzyme catalyses a fatty acyl-[ACP] + malonyl-[ACP] + H(+) = a 3-oxoacyl-[ACP] + holo-[ACP] + CO2. The catalysed reaction is (9Z)-hexadecenoyl-[ACP] + malonyl-[ACP] + H(+) = 3-oxo-(11Z)-octadecenoyl-[ACP] + holo-[ACP] + CO2. Its pathway is lipid metabolism; fatty acid biosynthesis. Its function is as follows. Involved in the type II fatty acid elongation cycle. Catalyzes the elongation of a wide range of acyl-ACP by the addition of two carbons from malonyl-ACP to an acyl acceptor. Can efficiently catalyze the conversion of palmitoleoyl-ACP (cis-hexadec-9-enoyl-ACP) to cis-vaccenoyl-ACP (cis-octadec-11-enoyl-ACP), an essential step in the thermal regulation of fatty acid composition. The polypeptide is 3-oxoacyl-[acyl-carrier-protein] synthase 2 (fabF) (Escherichia coli O157:H7).